Here is a 318-residue protein sequence, read N- to C-terminus: Carbamate kinase (318 aa).

It belongs to the carbamate kinase family.

The protein resides in the cytoplasm. The enzyme catalyses hydrogencarbonate + NH4(+) + ATP = carbamoyl phosphate + ADP + H2O + H(+). It participates in metabolic intermediate metabolism; carbamoyl phosphate degradation; CO(2) and NH(3) from carbamoyl phosphate: step 1/1. This is Carbamate kinase (arcC) from Lentilactobacillus hilgardii (Lactobacillus hilgardii).